A 217-amino-acid chain; its full sequence is Ribosomal large subunit pseudouridine synthase E (217 aa).

Asp79 (nucleophile) is an active-site residue.

Belongs to the pseudouridine synthase RsuA family.

It catalyses the reaction uridine(2457) in 23S rRNA = pseudouridine(2457) in 23S rRNA. Its function is as follows. Responsible for synthesis of pseudouridine from uracil-2457 in 23S ribosomal RNA. The protein is Ribosomal large subunit pseudouridine synthase E (rluE) of Escherichia coli O6:H1 (strain CFT073 / ATCC 700928 / UPEC).